The primary structure comprises 205 residues: N-(5'-phosphoribosyl)anthranilate isomerase (205 aa).

The protein belongs to the TrpF family.

It carries out the reaction N-(5-phospho-beta-D-ribosyl)anthranilate = 1-(2-carboxyphenylamino)-1-deoxy-D-ribulose 5-phosphate. Its pathway is amino-acid biosynthesis; L-tryptophan biosynthesis; L-tryptophan from chorismate: step 3/5. The polypeptide is N-(5'-phosphoribosyl)anthranilate isomerase (Acidiphilium cryptum (strain JF-5)).